The chain runs to 293 residues: Lysosomal amino acid transporter 1 homolog (293 aa).

Over 1–37 the chain is Lumenal; it reads MVWRTLVASNFSTCPNGSIQWIWDVFGECAQDGWDEA. N-linked (GlcNAc...) asparagine glycosylation is present at asparagine 10. Residues 34-100 form the PQ-loop 1 domain; sequence WDEASVALGL…LADQLPLQTY (67 aa). Residues 38 to 58 traverse the membrane as a helical segment; the sequence is SVALGLVSIFCFAASTFPQYI. Topologically, residues 59-71 are cytoplasmic; it reads KACKTGNMDQALS. The chain crosses the membrane as a helical span at residues 72 to 92; it reads LWFLLGWIGGDSCNLIGSFLA. The Lumenal portion of the chain corresponds to 93–96; it reads DQLP. A helical membrane pass occupies residues 97–117; it reads LQTYTAVYYVLADLLMLTLYF. Residues 118 to 126 are Cytoplasmic-facing; that stretch reads HYKFKKQPS. The chain crosses the membrane as a helical span at residues 127-147; sequence LLSAPINSVLLFILGTVCITP. Residues 148–182 lie on the Lumenal side of the membrane; sequence LLSSTDPVAVPREGFRGRTLLSVEPGNKPFTKKEV. A helical transmembrane segment spans residues 183 to 203; the sequence is VGFVIGSASSVLYLLSRLPQI. Residues 191–243 enclose the PQ-loop 2 domain; that stretch reads SSVLYLLSRLPQIRTNFVRQSTQGISYSLFALVMLGNTLYGLSVLLKNPEVGQ. The Cytoplasmic portion of the chain corresponds to 204-214; that stretch reads RTNFVRQSTQG. Residues 215–235 traverse the membrane as a helical segment; it reads ISYSLFALVMLGNTLYGLSVL. The Lumenal segment spans residues 236–254; it reads LKNPEVGQSEGSYLLHHLP. Residues 255–275 form a helical membrane-spanning segment; the sequence is WLVGSLGVLLLDTIISIQFLV. Residues 276–293 are Cytoplasmic-facing; that stretch reads YRSHDADAASEREPLLPS. Residues 290 to 291 carry the Di-leucine motif motif; sequence LL.

Belongs to the laat-1 family.

Its subcellular location is the lysosome membrane. In terms of biological role, amino acid transporter that specifically mediates the pH-dependent export of the cationic amino acids arginine, histidine and lysine from lysosomes. This is Lysosomal amino acid transporter 1 homolog (Slc66a1) from Rattus norvegicus (Rat).